A 138-amino-acid chain; its full sequence is Proline-rich protein 34 (138 aa).

The segment covering 22–37 (SAPTSPPNPATRPAPG) has biased composition (pro residues). Disordered regions lie at residues 22–55 (SAPT…PTRG) and 81–107 (APRL…SPAR).

This chain is Proline-rich protein 34 (PRR34), found in Homo sapiens (Human).